A 739-amino-acid polypeptide reads, in one-letter code: Phosphoribosylformylglycinamidine synthase subunit PurL (739 aa).

His-54 is an active-site residue. 2 residues coordinate ATP: Tyr-57 and Lys-96. Glu-98 is a Mg(2+) binding site. Substrate-binding positions include Ser-99–His-102 and Arg-121. Catalysis depends on His-100, which acts as the Proton acceptor. Asp-122 serves as a coordination point for Mg(2+). A substrate-binding site is contributed by Gln-245. Asp-273 contributes to the Mg(2+) binding site. Glu-317–Gln-319 provides a ligand contact to substrate. Residues Asp-500 and Gly-537 each contribute to the ATP site. Asn-538 serves as a coordination point for Mg(2+). Residue Ser-540 participates in substrate binding.

This sequence belongs to the FGAMS family. In terms of assembly, monomer. Part of the FGAM synthase complex composed of 1 PurL, 1 PurQ and 2 PurS subunits.

Its subcellular location is the cytoplasm. It carries out the reaction N(2)-formyl-N(1)-(5-phospho-beta-D-ribosyl)glycinamide + L-glutamine + ATP + H2O = 2-formamido-N(1)-(5-O-phospho-beta-D-ribosyl)acetamidine + L-glutamate + ADP + phosphate + H(+). The protein operates within purine metabolism; IMP biosynthesis via de novo pathway; 5-amino-1-(5-phospho-D-ribosyl)imidazole from N(2)-formyl-N(1)-(5-phospho-D-ribosyl)glycinamide: step 1/2. Its function is as follows. Part of the phosphoribosylformylglycinamidine synthase complex involved in the purines biosynthetic pathway. Catalyzes the ATP-dependent conversion of formylglycinamide ribonucleotide (FGAR) and glutamine to yield formylglycinamidine ribonucleotide (FGAM) and glutamate. The FGAM synthase complex is composed of three subunits. PurQ produces an ammonia molecule by converting glutamine to glutamate. PurL transfers the ammonia molecule to FGAR to form FGAM in an ATP-dependent manner. PurS interacts with PurQ and PurL and is thought to assist in the transfer of the ammonia molecule from PurQ to PurL. The chain is Phosphoribosylformylglycinamidine synthase subunit PurL from Bacillus cereus (strain ATCC 14579 / DSM 31 / CCUG 7414 / JCM 2152 / NBRC 15305 / NCIMB 9373 / NCTC 2599 / NRRL B-3711).